The following is a 71-amino-acid chain: Small ribosomal subunit protein bS21 (71 aa).

It belongs to the bacterial ribosomal protein bS21 family.

The polypeptide is Small ribosomal subunit protein bS21 (Buchnera aphidicola subsp. Cinara cedri (strain Cc)).